A 304-amino-acid polypeptide reads, in one-letter code: UDP-N-acetylenolpyruvoylglucosamine reductase (304 aa).

Residues 32 to 198 (RVGGPADILV…LSAELELQEG (167 aa)) enclose the FAD-binding PCMH-type domain. Residue Arg177 is part of the active site. Residue Ser227 is the Proton donor of the active site. Residue Glu297 is part of the active site.

This sequence belongs to the MurB family. Requires FAD as cofactor.

It localises to the cytoplasm. It carries out the reaction UDP-N-acetyl-alpha-D-muramate + NADP(+) = UDP-N-acetyl-3-O-(1-carboxyvinyl)-alpha-D-glucosamine + NADPH + H(+). It functions in the pathway cell wall biogenesis; peptidoglycan biosynthesis. In terms of biological role, cell wall formation. This chain is UDP-N-acetylenolpyruvoylglucosamine reductase, found in Clostridioides difficile (strain 630) (Peptoclostridium difficile).